The following is a 306-amino-acid chain: Curved DNA-binding protein (306 aa).

Residues 5 to 69 (DYYAIMGVKP…QRRAEYDQLW (65 aa)) form the J domain.

The protein localises to the cytoplasm. The protein resides in the nucleoid. In terms of biological role, DNA-binding protein that preferentially recognizes a curved DNA sequence. It is probably a functional analog of DnaJ; displays overlapping activities with DnaJ, but functions under different conditions, probably acting as a molecular chaperone in an adaptive response to environmental stresses other than heat shock. Lacks autonomous chaperone activity; binds native substrates and targets them for recognition by DnaK. Its activity is inhibited by the binding of CbpM. The polypeptide is Curved DNA-binding protein (Citrobacter koseri (strain ATCC BAA-895 / CDC 4225-83 / SGSC4696)).